The primary structure comprises 471 residues: Putative multidrug resistance protein MdtD (471 aa).

13 helical membrane passes run 12 to 32 (LWIV…VNTA), 49 to 69 (MIIV…GWLA), 77 to 97 (IFFT…QAST), 102 to 124 (VMAR…LTVM), 138 to 158 (FVTL…GVLV), 165 to 185 (WIFL…LCLM), 195 to 215 (FDLS…LALD), 220 to 240 (LGIS…ALLL), 263 to 283 (FSLG…LPFM), 286 to 306 (VFLQ…MIPM), 329 to 351 (VLVA…ALAG), 393 to 413 (LLSM…GLLL), and 431 to 451 (VFLY…LIFS).

The protein belongs to the major facilitator superfamily. TCR/Tet family.

It is found in the cell inner membrane. This Klebsiella pneumoniae subsp. pneumoniae (strain ATCC 700721 / MGH 78578) protein is Putative multidrug resistance protein MdtD.